The chain runs to 328 residues: tRNA U34 carboxymethyltransferase (328 aa).

Residues Lys-91, Trp-105, Lys-110, Gly-130, 181–182 (IE), Met-196, Tyr-200, and Arg-315 contribute to the carboxy-S-adenosyl-L-methionine site.

The protein belongs to the class I-like SAM-binding methyltransferase superfamily. CmoB family. Homotetramer.

It catalyses the reaction carboxy-S-adenosyl-L-methionine + 5-hydroxyuridine(34) in tRNA = 5-carboxymethoxyuridine(34) in tRNA + S-adenosyl-L-homocysteine + H(+). Functionally, catalyzes carboxymethyl transfer from carboxy-S-adenosyl-L-methionine (Cx-SAM) to 5-hydroxyuridine (ho5U) to form 5-carboxymethoxyuridine (cmo5U) at position 34 in tRNAs. The polypeptide is tRNA U34 carboxymethyltransferase (Pectobacterium carotovorum subsp. carotovorum (strain PC1)).